A 115-amino-acid polypeptide reads, in one-letter code: Small ribosomal subunit protein uS14m (115 aa).

This sequence belongs to the universal ribosomal protein uS14 family. Component of the mitochondrial small ribosomal subunit (mt-SSU). Mature yeast 74S mitochondrial ribosomes consist of a small (37S) and a large (54S) subunit. The 37S small subunit contains a 15S ribosomal RNA (15S mt-rRNA) and 34 different proteins. The 54S large subunit contains a 21S rRNA (21S mt-rRNA) and 46 different proteins.

It is found in the mitochondrion. In terms of biological role, component of the mitochondrial ribosome (mitoribosome), a dedicated translation machinery responsible for the synthesis of mitochondrial genome-encoded proteins, including at least some of the essential transmembrane subunits of the mitochondrial respiratory chain. The mitoribosomes are attached to the mitochondrial inner membrane and translation products are cotranslationally integrated into the membrane. This is Small ribosomal subunit protein uS14m (MRP2) from Saccharomyces cerevisiae (strain ATCC 204508 / S288c) (Baker's yeast).